The chain runs to 392 residues: Putative nickel insertion protein (392 aa).

Belongs to the LarC family.

The protein is Putative nickel insertion protein of Methanothrix thermoacetophila (strain DSM 6194 / JCM 14653 / NBRC 101360 / PT) (Methanosaeta thermophila).